Here is a 455-residue protein sequence, read N- to C-terminus: tRNA modification GTPase MnmE (455 aa).

(6S)-5-formyl-5,6,7,8-tetrahydrofolate-binding residues include R24, E81, and K120. The 163-residue stretch at 216–378 (GMTVVIAGRP…LREHLKACMG (163 aa)) folds into the TrmE-type G domain. N226 contacts K(+). GTP-binding positions include 226 to 231 (NAGKSS), 245 to 251 (TDIAGTT), 270 to 273 (DTAG), 335 to 338 (NKAD), and 359 to 361 (SAR). S230 serves as a coordination point for Mg(2+). 3 residues coordinate K(+): T245, I247, and T250. T251 serves as a coordination point for Mg(2+). Residue K455 participates in (6S)-5-formyl-5,6,7,8-tetrahydrofolate binding.

It belongs to the TRAFAC class TrmE-Era-EngA-EngB-Septin-like GTPase superfamily. TrmE GTPase family. As to quaternary structure, homodimer. Heterotetramer of two MnmE and two MnmG subunits. Requires K(+) as cofactor.

Its subcellular location is the cytoplasm. Its function is as follows. Exhibits a very high intrinsic GTPase hydrolysis rate. Involved in the addition of a carboxymethylaminomethyl (cmnm) group at the wobble position (U34) of certain tRNAs, forming tRNA-cmnm(5)s(2)U34. This chain is tRNA modification GTPase MnmE, found in Pseudomonas paraeruginosa (strain DSM 24068 / PA7) (Pseudomonas aeruginosa (strain PA7)).